Consider the following 514-residue polypeptide: 3-octaprenyl-4-hydroxybenzoate carboxy-lyase (514 aa).

Residue N177 participates in Mn(2+) binding. Residues 180–182 (IYR), 194–196 (RWL), and 199–200 (RG) contribute to the prenylated FMN site. E243 provides a ligand contact to Mn(2+). D314 functions as the Proton donor in the catalytic mechanism.

It belongs to the UbiD family. As to quaternary structure, homohexamer. The cofactor is prenylated FMN. Mn(2+) is required as a cofactor.

It localises to the cell membrane. The catalysed reaction is a 4-hydroxy-3-(all-trans-polyprenyl)benzoate + H(+) = a 2-(all-trans-polyprenyl)phenol + CO2. It participates in cofactor biosynthesis; ubiquinone biosynthesis. Functionally, catalyzes the decarboxylation of 3-octaprenyl-4-hydroxy benzoate to 2-octaprenylphenol, an intermediate step in ubiquinone biosynthesis. In Bordetella pertussis (strain Tohama I / ATCC BAA-589 / NCTC 13251), this protein is 3-octaprenyl-4-hydroxybenzoate carboxy-lyase.